A 504-amino-acid chain; its full sequence is Glycerol kinase (504 aa).

Thr13 lines the ADP pocket. ATP is bound by residues Thr13, Thr14, and Ser15. Thr13 is a binding site for sn-glycerol 3-phosphate. Arg17 contributes to the ADP binding site. Sn-glycerol 3-phosphate-binding residues include Arg83, Glu84, and Tyr135. Arg83, Glu84, and Tyr135 together coordinate glycerol. His231 carries the post-translational modification Phosphohistidine; by HPr. A sn-glycerol 3-phosphate-binding site is contributed by Asp245. Glycerol-binding residues include Asp245 and Gln246. ADP contacts are provided by Thr267 and Gly310. ATP is bound by residues Thr267, Gly310, Gln314, and Gly411. The ADP site is built by Gly411 and Asn415.

This sequence belongs to the FGGY kinase family. In terms of assembly, homotetramer and homodimer (in equilibrium). The phosphoenolpyruvate-dependent sugar phosphotransferase system (PTS), including enzyme I, and histidine-containing protein (HPr) are required for the phosphorylation, which leads to the activation of the enzyme.

It carries out the reaction glycerol + ATP = sn-glycerol 3-phosphate + ADP + H(+). Its pathway is polyol metabolism; glycerol degradation via glycerol kinase pathway; sn-glycerol 3-phosphate from glycerol: step 1/1. With respect to regulation, activated by phosphorylation and inhibited by fructose 1,6-bisphosphate (FBP). Its function is as follows. Key enzyme in the regulation of glycerol uptake and metabolism. Catalyzes the phosphorylation of glycerol to yield sn-glycerol 3-phosphate. In Ligilactobacillus salivarius (strain UCC118) (Lactobacillus salivarius), this protein is Glycerol kinase.